Reading from the N-terminus, the 897-residue chain is Protein translocase subunit SecA (897 aa).

ATP is bound by residues glutamine 89, 107-111 (GEGKT), and aspartate 517. Positions 839-856 (DDAQATHSNPNEQTKQAS) are enriched in polar residues. Residues 839–897 (DDAQATHSNPNEQTKQASITNNIQTQTDQQNTYQRKEKKVGRNEPCPCGSGKKYKKCHG) form a disordered region. The segment covering 857 to 870 (ITNNIQTQTDQQNT) has biased composition (low complexity). Positions 884, 886, 895, and 896 each coordinate Zn(2+).

The protein belongs to the SecA family. As to quaternary structure, monomer and homodimer. Part of the essential Sec protein translocation apparatus which comprises SecA, SecYEG and auxiliary proteins SecDF-YajC and YidC. The cofactor is Zn(2+).

Its subcellular location is the cell inner membrane. It is found in the cytoplasm. It carries out the reaction ATP + H2O + cellular proteinSide 1 = ADP + phosphate + cellular proteinSide 2.. Part of the Sec protein translocase complex. Interacts with the SecYEG preprotein conducting channel. Has a central role in coupling the hydrolysis of ATP to the transfer of proteins into and across the cell membrane, serving as an ATP-driven molecular motor driving the stepwise translocation of polypeptide chains across the membrane. This is Protein translocase subunit SecA from Vesicomyosocius okutanii subsp. Calyptogena okutanii (strain HA).